The primary structure comprises 706 residues: MLNPIVRKFQYGQHTVTLETGMMARQATAAVMVSMDDTAVFVTVVGAKNAKPGQSFFPLTVNYQERTYAAGRFPGGFFRREGRPSEGETLISRLIDRPIRPLFPEGFLNEVQVIATVVSVNPQVNPDIVAMIGASAALSLSGIPFSGPIGAARVGYLNDQYVLNPTTDELKESRLDLVVAGTEGAVLMVESEADLLSEDQMLGAVVFGHDQQQVVIENINALVAEAGKPKWDWHAPEVNVSLEQRVQALSEARLGDAYRITEKQERYAQVDVIKADVEAALLAEDETLNAGEIQEILGNVEKNVVRSRVLAGEPRIDGREKDMIRGLDVRTGVLPRTHGSALFTRGETQALVTATLGTERDAQTIDELTGERTDRFLLHYNFPPYSVGETGMVGSPKRREIGHGRLAKRGVLAVMPKASEFPYTVRVVSEITESNGSSSMASVCGASLALMDAGVPIKSAVAGIAMGLVKEGDNFVVLSDILGDEDHLGDMDFKVAGSREGITALQMDIKIEGITREIMQVALNQAKGARLHILGVMEQAISTPRGDISEFAPRIHTIKISTDKIKDVIGKGGSVIRALTEETGTTIEIEDDGTVKIASTDGEKAKHAIRRIEEITAEIEVGRVYQGKVTRIVDFGAFVAIGGGKEGLVHISQIADKRVEKVTDYLQMGQEVPVKVLEVDRQGRVRLSIKEATAPTQEAAAPSSEE.

Mg(2+) contacts are provided by aspartate 486 and aspartate 492. Residues 553 to 612 form the KH domain; that stretch reads PRIHTIKISTDKIKDVIGKGGSVIRALTEETGTTIEIEDDGTVKIASTDGEKAKHAIRRI. The region spanning 622-690 is the S1 motif domain; that stretch reads GRVYQGKVTR…RQGRVRLSIK (69 aa).

The protein belongs to the polyribonucleotide nucleotidyltransferase family. In terms of assembly, component of the RNA degradosome, which is a multiprotein complex involved in RNA processing and mRNA degradation. The cofactor is Mg(2+).

Its subcellular location is the cytoplasm. It catalyses the reaction RNA(n+1) + phosphate = RNA(n) + a ribonucleoside 5'-diphosphate. In terms of biological role, involved in mRNA degradation. Catalyzes the phosphorolysis of single-stranded polyribonucleotides processively in the 3'- to 5'-direction. This is Polyribonucleotide nucleotidyltransferase from Pectobacterium carotovorum subsp. carotovorum (strain PC1).